Consider the following 527-residue polypeptide: Peptide chain release factor 3 (527 aa).

The tr-type G domain occupies 9–277; sequence AKRRTFAIIS…AVVDWAPRPL (269 aa). GTP-binding positions include 18–25, 86–90, and 140–143; these read SHPDAGKT, DTPGH, and NKLD.

The protein belongs to the TRAFAC class translation factor GTPase superfamily. Classic translation factor GTPase family. PrfC subfamily.

It localises to the cytoplasm. Its function is as follows. Increases the formation of ribosomal termination complexes and stimulates activities of RF-1 and RF-2. It binds guanine nucleotides and has strong preference for UGA stop codons. It may interact directly with the ribosome. The stimulation of RF-1 and RF-2 is significantly reduced by GTP and GDP, but not by GMP. The chain is Peptide chain release factor 3 from Pseudomonas fluorescens (strain SBW25).